The sequence spans 176 residues: ATP-dependent protease subunit HslV (176 aa).

The active site involves threonine 6. 3 residues coordinate Na(+): serine 161, cysteine 164, and threonine 167.

It belongs to the peptidase T1B family. HslV subfamily. In terms of assembly, a double ring-shaped homohexamer of HslV is capped on each side by a ring-shaped HslU homohexamer. The assembly of the HslU/HslV complex is dependent on binding of ATP.

The protein resides in the cytoplasm. It carries out the reaction ATP-dependent cleavage of peptide bonds with broad specificity.. Its activity is regulated as follows. Allosterically activated by HslU binding. Protease subunit of a proteasome-like degradation complex believed to be a general protein degrading machinery. The protein is ATP-dependent protease subunit HslV of Aquifex aeolicus (strain VF5).